A 678-amino-acid polypeptide reads, in one-letter code: Endoplasmic reticulum membrane-associated RNA degradation protein (678 aa).

Transmembrane regions (helical) follow at residues Leu390–Phe410 and Val587–Gly607.

It localises to the endoplasmic reticulum membrane. May play a role in neuronal migration during embryonic development. The polypeptide is Endoplasmic reticulum membrane-associated RNA degradation protein (ERMARD) (Homo sapiens (Human)).